The following is an 878-amino-acid chain: Aconitate hydratase A (878 aa).

Positions 426, 492, and 495 each coordinate [4Fe-4S] cluster.

Belongs to the aconitase/IPM isomerase family. In terms of assembly, monomer. It depends on [4Fe-4S] cluster as a cofactor.

It catalyses the reaction citrate = D-threo-isocitrate. The catalysed reaction is (2S,3R)-3-hydroxybutane-1,2,3-tricarboxylate = 2-methyl-cis-aconitate + H2O. The protein operates within carbohydrate metabolism; tricarboxylic acid cycle; isocitrate from oxaloacetate: step 2/2. It functions in the pathway organic acid metabolism; propanoate degradation. Involved in the catabolism of short chain fatty acids (SCFA) via the tricarboxylic acid (TCA)(acetyl degradation route) and probably the 2-methylcitrate cycle I (propionate degradation route). Catalyzes the reversible isomerization of citrate to isocitrate via cis-aconitate. Could catalyze the hydration of 2-methyl-cis-aconitate to yield (2R,3S)-2-methylisocitrate. The apo form of AcnA functions as a RNA-binding regulatory protein. This is Aconitate hydratase A (acnA) from Rickettsia prowazekii (strain Madrid E).